A 305-amino-acid polypeptide reads, in one-letter code: L-lactate dehydrogenase (305 aa).

NAD(+) is bound by residues Val-11, Asp-32, Lys-37, and 76–77 (GV). Residues Gln-79, Arg-85, and 117–120 (NPVD) each bind substrate. NAD(+) contacts are provided by residues 115–117 (ATN) and Ser-140. A substrate-binding site is contributed by 145 to 148 (DTAR). Beta-D-fructose 1,6-bisphosphate is bound by residues Arg-150 and His-165. His-172 acts as the Proton acceptor in catalysis. At Tyr-218 the chain carries Phosphotyrosine. Thr-227 lines the substrate pocket.

The protein belongs to the LDH/MDH superfamily. LDH family. Homotetramer.

The protein resides in the cytoplasm. The catalysed reaction is (S)-lactate + NAD(+) = pyruvate + NADH + H(+). It functions in the pathway fermentation; pyruvate fermentation to lactate; (S)-lactate from pyruvate: step 1/1. With respect to regulation, allosterically activated by fructose 1,6-bisphosphate (FBP). Catalyzes the conversion of lactate to pyruvate. In Chloroherpeton thalassium (strain ATCC 35110 / GB-78), this protein is L-lactate dehydrogenase.